A 345-amino-acid polypeptide reads, in one-letter code: L-threonine 3-dehydrogenase (345 aa).

Position 42 (Cys-42) interacts with Zn(2+). Catalysis depends on charge relay system residues Thr-44 and His-47. Zn(2+) contacts are provided by His-67, Glu-68, Cys-97, Cys-100, Cys-103, and Cys-111. NAD(+)-binding positions include Ile-179, Asp-199, Arg-204, 266–268 (LGI), and 290–291 (IY).

It belongs to the zinc-containing alcohol dehydrogenase family. In terms of assembly, homotetramer. Zn(2+) is required as a cofactor.

The protein resides in the cytoplasm. The catalysed reaction is L-threonine + NAD(+) = (2S)-2-amino-3-oxobutanoate + NADH + H(+). The protein operates within amino-acid degradation; L-threonine degradation via oxydo-reductase pathway; glycine from L-threonine: step 1/2. In terms of biological role, catalyzes the NAD(+)-dependent oxidation of L-threonine to 2-amino-3-ketobutyrate. The protein is L-threonine 3-dehydrogenase of Rhizobium etli (strain CIAT 652).